We begin with the raw amino-acid sequence, 483 residues long: Bifunctional protein HldE (483 aa).

Residues 1 to 327 (MDDALAHLPR…ACASSAQGEP (327 aa)) are ribokinase. 201–204 (NRKE) is an ATP binding site. The active site involves aspartate 272. The segment at 354–483 (FTNGCFDLLH…TTNLIARMNS (130 aa)) is cytidylyltransferase.

This sequence in the N-terminal section; belongs to the carbohydrate kinase PfkB family. It in the C-terminal section; belongs to the cytidylyltransferase family. As to quaternary structure, homodimer.

The enzyme catalyses D-glycero-beta-D-manno-heptose 7-phosphate + ATP = D-glycero-beta-D-manno-heptose 1,7-bisphosphate + ADP + H(+). It carries out the reaction D-glycero-beta-D-manno-heptose 1-phosphate + ATP + H(+) = ADP-D-glycero-beta-D-manno-heptose + diphosphate. Its pathway is nucleotide-sugar biosynthesis; ADP-L-glycero-beta-D-manno-heptose biosynthesis; ADP-L-glycero-beta-D-manno-heptose from D-glycero-beta-D-manno-heptose 7-phosphate: step 1/4. The protein operates within nucleotide-sugar biosynthesis; ADP-L-glycero-beta-D-manno-heptose biosynthesis; ADP-L-glycero-beta-D-manno-heptose from D-glycero-beta-D-manno-heptose 7-phosphate: step 3/4. Functionally, catalyzes the phosphorylation of D-glycero-D-manno-heptose 7-phosphate at the C-1 position to selectively form D-glycero-beta-D-manno-heptose-1,7-bisphosphate. Catalyzes the ADP transfer from ATP to D-glycero-beta-D-manno-heptose 1-phosphate, yielding ADP-D-glycero-beta-D-manno-heptose. This is Bifunctional protein HldE from Caulobacter vibrioides (strain ATCC 19089 / CIP 103742 / CB 15) (Caulobacter crescentus).